Here is a 476-residue protein sequence, read N- to C-terminus: Lactate utilization protein B (476 aa).

4Fe-4S ferredoxin-type domains follow at residues 304 to 334 and 353 to 382; these read GTEFQSVLQCIRCAACINVCPVYRHVGGHSY and YDEYKELPYASSLCAACTEACPVKIPLHEL. 7 residues coordinate [4Fe-4S] cluster: cysteine 313, cysteine 316, cysteine 319, cysteine 323, cysteine 366, cysteine 369, and cysteine 373.

This sequence belongs to the LutB/YkgF family.

Is involved in L-lactate degradation and allows cells to grow with lactate as the sole carbon source. Has probably a role as an electron transporter during oxidation of L-lactate. In Bacillus velezensis (strain DSM 23117 / BGSC 10A6 / LMG 26770 / FZB42) (Bacillus amyloliquefaciens subsp. plantarum), this protein is Lactate utilization protein B.